The primary structure comprises 303 residues: MYYGFDVGGTKIEFGAFNEKLERVATERVPTPTDDYPLLLETIAGLVAKYDQEFACEGKIGLGLPGMEDADDATVLTVNVPAAKGKPLRADLEAKIGRSVKIENDANCFALSEAWDEELQDAPSVMGLILGTGFGGGLIYEGKVFSGRNNVAGELGHMRLPLDAWFHLGDNAPLLGCGCGKKGCLDSYLSGRGFELLYAHYYGEEKKAIDIIKANAAGDEKAAEHVERFMELLAICFGNIFTANDPHVVALGGGLSNFELIYEEMPKRVPKYLLSVAKCPKIIKAKHGDSGGVRGAAFLNIKG.

Residues Gly4 to Lys11 and Gly133 to Tyr140 each bind ATP. Residues His157, Cys177, Cys179, and Cys184 each coordinate Zn(2+).

It belongs to the ROK (NagC/XylR) family. NagK subfamily.

It carries out the reaction N-acetyl-D-glucosamine + ATP = N-acetyl-D-glucosamine 6-phosphate + ADP + H(+). It participates in cell wall biogenesis; peptidoglycan recycling. Functionally, catalyzes the phosphorylation of N-acetyl-D-glucosamine (GlcNAc) derived from cell-wall degradation, yielding GlcNAc-6-P. The protein is N-acetyl-D-glucosamine kinase of Vibrio vulnificus (strain CMCP6).